The following is a 369-amino-acid chain: Nuclear hormone receptor family member nhr-64 (369 aa).

A DNA-binding region (nuclear receptor) is located at residues 67 to 142; that stretch reads EKCQVDKAKR…ASTRGLRTTV (76 aa). 2 consecutive NR C4-type zinc fingers follow at residues 70 to 90 and 106 to 130; these read QVDK…CLRK and PANP…TLIR. Positions 120-352 constitute an NR LBD domain; it reads PDDPLLDTLI…NLMLELMLPN (233 aa).

This sequence belongs to the nuclear hormone receptor family.

It is found in the nucleus. Its function is as follows. Orphan nuclear receptor. The protein is Nuclear hormone receptor family member nhr-64 (nhr-64) of Caenorhabditis elegans.